A 317-amino-acid polypeptide reads, in one-letter code: Ornithine carbamoyltransferase (317 aa).

Carbamoyl phosphate contacts are provided by residues 57–60, Q84, R108, and 135–138; these read STRT and HPCQ. Residues N166, D230, and 234 to 235 each bind L-ornithine; that span reads SM. Residues 270–271 and R298 each bind carbamoyl phosphate; that span reads CL.

It belongs to the aspartate/ornithine carbamoyltransferase superfamily. OTCase family. Homododecamer.

It localises to the cytoplasm. It carries out the reaction carbamoyl phosphate + L-ornithine = L-citrulline + phosphate + H(+). Its pathway is amino-acid biosynthesis; L-arginine biosynthesis; L-arginine from L-ornithine and carbamoyl phosphate: step 1/3. Its function is as follows. Reversibly catalyzes the transfer of the carbamoyl group from carbamoyl phosphate (CP) to the N(epsilon) atom of ornithine (ORN) to produce L-citrulline. In Pyrococcus horikoshii (strain ATCC 700860 / DSM 12428 / JCM 9974 / NBRC 100139 / OT-3), this protein is Ornithine carbamoyltransferase.